The sequence spans 166 residues: Small ribosomal subunit protein uS5 (166 aa).

In terms of domain architecture, S5 DRBM spans Tyr12–Val75.

Belongs to the universal ribosomal protein uS5 family. In terms of assembly, part of the 30S ribosomal subunit. Contacts proteins S4 and S8.

In terms of biological role, with S4 and S12 plays an important role in translational accuracy. Functionally, located at the back of the 30S subunit body where it stabilizes the conformation of the head with respect to the body. The sequence is that of Small ribosomal subunit protein uS5 from Azotobacter vinelandii (strain DJ / ATCC BAA-1303).